A 533-amino-acid polypeptide reads, in one-letter code: GPI mannosyltransferase 4 (533 aa).

A run of 6 helical transmembrane segments spans residues 8 to 28 (AIIY…SSYI), 61 to 81 (IRSV…CRCI), 91 to 111 (ILLF…LSIW), 144 to 164 (IETI…SVPL), 175 to 195 (LLAI…AFVI), and 216 to 236 (IFLH…ACIL). The N-linked (GlcNAc...) asparagine glycan is linked to Asn261. 4 helical membrane passes run 274-294 (FFTN…LWDV), 297-317 (PATW…HQEP), 319-335 (FLLP…GCLV), and 338-358 (YWIK…FGIM). N-linked (GlcNAc...) asparagine glycans are attached at residues Asn378, Asn419, Asn425, Asn452, Asn477, and Asn518.

The protein belongs to the glycosyltransferase 22 family. PIGZ subfamily.

The protein resides in the endoplasmic reticulum membrane. Its pathway is glycolipid biosynthesis; glycosylphosphatidylinositol-anchor biosynthesis. Functionally, alpha-1,2-mannosyltransferase involved in glycosylphosphatidylinositol-anchor biosynthesis. Transfers a fourth mannose to trimannosyl-GPIs during GPI precursor assembly. The presence of a fourth mannose in GPI is essential in fungi. This is GPI mannosyltransferase 4 (smp3) from Schizosaccharomyces pombe (strain 972 / ATCC 24843) (Fission yeast).